We begin with the raw amino-acid sequence, 388 residues long: Coproporphyrin III ferrochelatase (388 aa).

Fe-coproporphyrin III-binding residues include S59 and Y124. H186 and E276 together coordinate Fe(2+). The disordered stretch occupies residues 349–369 (QSPQHASRAVTDAAATGRRGD).

The protein belongs to the ferrochelatase family.

It is found in the cytoplasm. The catalysed reaction is Fe-coproporphyrin III + 2 H(+) = coproporphyrin III + Fe(2+). Its pathway is porphyrin-containing compound metabolism; protoheme biosynthesis. Involved in coproporphyrin-dependent heme b biosynthesis. Catalyzes the insertion of ferrous iron into coproporphyrin III to form Fe-coproporphyrin III. The polypeptide is Coproporphyrin III ferrochelatase (Frankia alni (strain DSM 45986 / CECT 9034 / ACN14a)).